Consider the following 679-residue polypeptide: UvrABC system protein B (679 aa).

The Helicase ATP-binding domain maps to 31-414 (ENLTDGLAHQ…ELEKSGTEII (384 aa)). 44–51 (GVTGSGKT) serves as a coordination point for ATP. Residues 97 to 120 (YYDYYQPEAYVPSSDTFIEKDASI) carry the Beta-hairpin motif. In terms of domain architecture, Helicase C-terminal spans 436–589 (QVDDLLSEAR…QIKYNEEHGI (154 aa)). A UVR domain is found at 639–674 (QQQIKKLEQQMYKFAQDLEFEKAAAIRDQLHQLREQ).

This sequence belongs to the UvrB family. In terms of assembly, forms a heterotetramer with UvrA during the search for lesions. Interacts with UvrC in an incision complex.

It is found in the cytoplasm. The UvrABC repair system catalyzes the recognition and processing of DNA lesions. A damage recognition complex composed of 2 UvrA and 2 UvrB subunits scans DNA for abnormalities. Upon binding of the UvrA(2)B(2) complex to a putative damaged site, the DNA wraps around one UvrB monomer. DNA wrap is dependent on ATP binding by UvrB and probably causes local melting of the DNA helix, facilitating insertion of UvrB beta-hairpin between the DNA strands. Then UvrB probes one DNA strand for the presence of a lesion. If a lesion is found the UvrA subunits dissociate and the UvrB-DNA preincision complex is formed. This complex is subsequently bound by UvrC and the second UvrB is released. If no lesion is found, the DNA wraps around the other UvrB subunit that will check the other stand for damage. This is UvrABC system protein B from Haemophilus influenzae (strain 86-028NP).